Consider the following 294-residue polypeptide: 4-hydroxy-tetrahydrodipicolinate synthase (294 aa).

Thr-45 provides a ligand contact to pyruvate. Tyr-133 acts as the Proton donor/acceptor in catalysis. The Schiff-base intermediate with substrate role is filled by Lys-162. Val-204 provides a ligand contact to pyruvate.

Belongs to the DapA family. Homotetramer; dimer of dimers.

The protein localises to the cytoplasm. The enzyme catalyses L-aspartate 4-semialdehyde + pyruvate = (2S,4S)-4-hydroxy-2,3,4,5-tetrahydrodipicolinate + H2O + H(+). It participates in amino-acid biosynthesis; L-lysine biosynthesis via DAP pathway; (S)-tetrahydrodipicolinate from L-aspartate: step 3/4. Functionally, catalyzes the condensation of (S)-aspartate-beta-semialdehyde [(S)-ASA] and pyruvate to 4-hydroxy-tetrahydrodipicolinate (HTPA). The polypeptide is 4-hydroxy-tetrahydrodipicolinate synthase (Bartonella bacilliformis (strain ATCC 35685 / KC583 / Herrer 020/F12,63)).